We begin with the raw amino-acid sequence, 412 residues long: Multifunctional CCA protein (412 aa).

Residues glycine 8 and arginine 11 each contribute to the ATP site. Residues glycine 8 and arginine 11 each contribute to the CTP site. Residues glutamate 21 and aspartate 23 each contribute to the Mg(2+) site. 3 residues coordinate ATP: arginine 92, arginine 138, and arginine 141. CTP-binding residues include arginine 92, arginine 138, and arginine 141. Positions 227–328 constitute an HD domain; that stretch reads TGIHTMMTVA…IKLFYAIDVW (102 aa).

Belongs to the tRNA nucleotidyltransferase/poly(A) polymerase family. Bacterial CCA-adding enzyme type 1 subfamily. Monomer. Can also form homodimers and oligomers. Requires Mg(2+) as cofactor. It depends on Ni(2+) as a cofactor.

The enzyme catalyses a tRNA precursor + 2 CTP + ATP = a tRNA with a 3' CCA end + 3 diphosphate. It catalyses the reaction a tRNA with a 3' CCA end + 2 CTP + ATP = a tRNA with a 3' CCACCA end + 3 diphosphate. Functionally, catalyzes the addition and repair of the essential 3'-terminal CCA sequence in tRNAs without using a nucleic acid template. Adds these three nucleotides in the order of C, C, and A to the tRNA nucleotide-73, using CTP and ATP as substrates and producing inorganic pyrophosphate. tRNA 3'-terminal CCA addition is required both for tRNA processing and repair. Also involved in tRNA surveillance by mediating tandem CCA addition to generate a CCACCA at the 3' terminus of unstable tRNAs. While stable tRNAs receive only 3'-terminal CCA, unstable tRNAs are marked with CCACCA and rapidly degraded. This Baumannia cicadellinicola subsp. Homalodisca coagulata protein is Multifunctional CCA protein.